Here is a 517-residue protein sequence, read N- to C-terminus: Zinc finger protein 215 (517 aa).

Positions 48-126 constitute an SCAN box domain; sequence RQKFRHFQYL…EDMVTLIEDV (79 aa). One can recognise a KRAB domain in the interval 164 to 237; the sequence is VTFKDVVVEF…EKEIPRKTIF (74 aa). 4 consecutive C2H2-type zinc fingers follow at residues 379–401, 407–429, 462–484, and 490–512; these read YECY…QIIH, YKCS…QKLH, YECV…QMIH, and FKCK…QKLH.

It belongs to the krueppel C2H2-type zinc-finger protein family.

It is found in the nucleus. Functionally, may be involved in transcriptional regulation. The polypeptide is Zinc finger protein 215 (ZNF215) (Pongo abelii (Sumatran orangutan)).